A 269-amino-acid polypeptide reads, in one-letter code: Shikimate dehydrogenase (NADP(+)) (269 aa).

Residues 15 to 17 and T62 contribute to the shikimate site; that span reads SLS. K66 (proton acceptor) is an active-site residue. Shikimate is bound by residues N86 and D100. NADP(+)-binding positions include 124-128, 147-152, and I211; these read GAGGA and NRTPER. Y213 lines the shikimate pocket. Position 234 (G234) interacts with NADP(+).

It belongs to the shikimate dehydrogenase family. In terms of assembly, homodimer.

The enzyme catalyses shikimate + NADP(+) = 3-dehydroshikimate + NADPH + H(+). The protein operates within metabolic intermediate biosynthesis; chorismate biosynthesis; chorismate from D-erythrose 4-phosphate and phosphoenolpyruvate: step 4/7. In terms of biological role, involved in the biosynthesis of the chorismate, which leads to the biosynthesis of aromatic amino acids. Catalyzes the reversible NADPH linked reduction of 3-dehydroshikimate (DHSA) to yield shikimate (SA). This chain is Shikimate dehydrogenase (NADP(+)), found in Methanococcoides burtonii (strain DSM 6242 / NBRC 107633 / OCM 468 / ACE-M).